A 155-amino-acid chain; its full sequence is Endoribonuclease YbeY (155 aa).

3 residues coordinate Zn(2+): His120, His124, and His130.

The protein belongs to the endoribonuclease YbeY family. Requires Zn(2+) as cofactor.

It localises to the cytoplasm. In terms of biological role, single strand-specific metallo-endoribonuclease involved in late-stage 70S ribosome quality control and in maturation of the 3' terminus of the 16S rRNA. This Alkaliphilus metalliredigens (strain QYMF) protein is Endoribonuclease YbeY.